The sequence spans 216 residues: Adenylate kinase (216 aa).

11-16 (GSGKGT) serves as a coordination point for ATP. Residues 31-60 (ATGDLFRKAIERGDELGDTVKSYMERGELV) are NMP. AMP-binding positions include Thr-32, Arg-37, 58-60 (ELV), 86-89 (GFPR), and Gln-93. Positions 127–163 (GRWVCRSCQSPYQCGCAEVAEGKCSRCQGELYQRPDD) are LID. Arg-128 contributes to the ATP binding site. Cys-131, Cys-134, Cys-150, and Cys-153 together coordinate Zn(2+). Residues Arg-160 and Arg-171 each coordinate AMP. Ala-199 is a binding site for ATP.

The protein belongs to the adenylate kinase family. In terms of assembly, monomer.

The protein localises to the cytoplasm. The enzyme catalyses AMP + ATP = 2 ADP. It functions in the pathway purine metabolism; AMP biosynthesis via salvage pathway; AMP from ADP: step 1/1. Functionally, catalyzes the reversible transfer of the terminal phosphate group between ATP and AMP. Plays an important role in cellular energy homeostasis and in adenine nucleotide metabolism. The polypeptide is Adenylate kinase (Dehalococcoides mccartyi (strain ATCC BAA-2266 / KCTC 15142 / 195) (Dehalococcoides ethenogenes (strain 195))).